We begin with the raw amino-acid sequence, 433 residues long: Inositol hexakisphosphate kinase 1 (433 aa).

Positions 100–160 are disordered; it reads ETVEQDDTPE…SPKVELHSHS (61 aa). Positions 113-123 are enriched in basic residues; sequence PRRKHSRRSLH. Polar residues predominate over residues 139–149; it reads SFETSESSQEA. The span at 150–160 shows a compositional bias: basic and acidic residues; that stretch reads KSPKVELHSHS. Serine 151 is subject to Phosphoserine. 220-228 serves as a coordination point for substrate; it reads PCVLDLKMG. Residues 359–383 are disordered; that stretch reads EVPPPCGPSTSPSSTSLEAGPSSPP.

It belongs to the inositol phosphokinase (IPK) family. In terms of tissue distribution, highly expressed in brain and testis. Detected at much lower levels in heart, kidney, liver, lung and spleen.

It is found in the cytoplasm. The protein localises to the nucleus. The catalysed reaction is 1D-myo-inositol hexakisphosphate + ATP = 5-diphospho-1D-myo-inositol 1,2,3,4,6-pentakisphosphate + ADP. It carries out the reaction 1-diphospho-1D-myo-inositol 2,3,4,5,6-pentakisphosphate + ATP + H(+) = 1,5-bis(diphospho)-1D-myo-inositol 2,3,4,6-tetrakisphosphate + ADP. Its function is as follows. Converts inositol hexakisphosphate (InsP6) to diphosphoinositol pentakisphosphate (InsP7/PP-InsP5). Converts 1,3,4,5,6-pentakisphosphate (InsP5) to PP-InsP4. This chain is Inositol hexakisphosphate kinase 1 (Ip6k1), found in Mus musculus (Mouse).